A 418-amino-acid chain; its full sequence is Tyrosine--tRNA ligase (418 aa).

Tyr34 is a binding site for L-tyrosine. A 'HIGH' region motif is present at residues 39–48 (PTADSLHLGH). Residues Tyr169 and Gln173 each contribute to the L-tyrosine site. The 'KMSKS' region motif lies at 229–233 (KFGKS). Lys232 serves as a coordination point for ATP. One can recognise an S4 RNA-binding domain in the interval 352 to 418 (LNLVDMLVTA…GKKKYAVLTY (67 aa)).

This sequence belongs to the class-I aminoacyl-tRNA synthetase family. TyrS type 1 subfamily. As to quaternary structure, homodimer.

The protein resides in the cytoplasm. The catalysed reaction is tRNA(Tyr) + L-tyrosine + ATP = L-tyrosyl-tRNA(Tyr) + AMP + diphosphate + H(+). In terms of biological role, catalyzes the attachment of tyrosine to tRNA(Tyr) in a two-step reaction: tyrosine is first activated by ATP to form Tyr-AMP and then transferred to the acceptor end of tRNA(Tyr). This Streptococcus pyogenes serotype M5 (strain Manfredo) protein is Tyrosine--tRNA ligase.